The primary structure comprises 431 residues: 3-phosphoshikimate 1-carboxyvinyltransferase (431 aa).

K21, S22, and R26 together coordinate 3-phosphoshikimate. Phosphoenolpyruvate is bound at residue K21. Phosphoenolpyruvate is bound by residues G93 and R121. Residues S166, Q168, D318, and K345 each contribute to the 3-phosphoshikimate site. Q168 contributes to the phosphoenolpyruvate binding site. D318 acts as the Proton acceptor in catalysis. R349 and R391 together coordinate phosphoenolpyruvate.

Belongs to the EPSP synthase family. As to quaternary structure, monomer.

Its subcellular location is the cytoplasm. The catalysed reaction is 3-phosphoshikimate + phosphoenolpyruvate = 5-O-(1-carboxyvinyl)-3-phosphoshikimate + phosphate. Its pathway is metabolic intermediate biosynthesis; chorismate biosynthesis; chorismate from D-erythrose 4-phosphate and phosphoenolpyruvate: step 6/7. In terms of biological role, catalyzes the transfer of the enolpyruvyl moiety of phosphoenolpyruvate (PEP) to the 5-hydroxyl of shikimate-3-phosphate (S3P) to produce enolpyruvyl shikimate-3-phosphate and inorganic phosphate. This Sulfurihydrogenibium sp. (strain YO3AOP1) protein is 3-phosphoshikimate 1-carboxyvinyltransferase.